The primary structure comprises 705 residues: Polyribonucleotide nucleotidyltransferase (705 aa).

Asp-492 and Asp-498 together coordinate Mg(2+). The region spanning 559–618 (PLMITMKVSPDKIRHIIGPGGKIINKIIDETGVEIDIDDDGSVYILAQDQESGNRAKEII) is the KH domain. In terms of domain architecture, S1 motif spans 628–696 (GDIYEGRVKK…ELGRINLSRK (69 aa)).

This sequence belongs to the polyribonucleotide nucleotidyltransferase family. Mg(2+) serves as cofactor.

The protein localises to the cytoplasm. It catalyses the reaction RNA(n+1) + phosphate = RNA(n) + a ribonucleoside 5'-diphosphate. In terms of biological role, involved in mRNA degradation. Catalyzes the phosphorolysis of single-stranded polyribonucleotides processively in the 3'- to 5'-direction. The sequence is that of Polyribonucleotide nucleotidyltransferase from Halothermothrix orenii (strain H 168 / OCM 544 / DSM 9562).